A 180-amino-acid polypeptide reads, in one-letter code: Bifunctional protein PyrR (180 aa).

The PRPP-binding signature appears at 99–111 (VILVDDVLYTCRT).

Belongs to the purine/pyrimidine phosphoribosyltransferase family. PyrR subfamily. In terms of assembly, homodimer and homohexamer; in equilibrium.

It catalyses the reaction UMP + diphosphate = 5-phospho-alpha-D-ribose 1-diphosphate + uracil. Regulates transcriptional attenuation of the pyrimidine nucleotide (pyr) operon by binding in a uridine-dependent manner to specific sites on pyr mRNA. This disrupts an antiterminator hairpin in the RNA and favors formation of a downstream transcription terminator, leading to a reduced expression of downstream genes. In terms of biological role, also displays a weak uracil phosphoribosyltransferase activity which is not physiologically significant. In Clostridium botulinum (strain Eklund 17B / Type B), this protein is Bifunctional protein PyrR.